The primary structure comprises 319 residues: Transmembrane and ubiquitin-like domain-containing protein 2 (319 aa).

The helical transmembrane segment at 36–56 threads the bilayer; it reads VMVVAGVVVLTLALVLAWLST. Disordered stretches follow at residues 88-130 and 146-165; these read VNQG…GDME and QAGLESSRPEASLGLDDSTC. Residues 95–111 show a composition bias toward basic and acidic residues; the sequence is PTEHPHPSGGSDDKAEE. The 74-residue stretch at 173-246 folds into the Ubiquitin-like domain; it reads INVRLKFLND…IHCHRSPPGA (74 aa). 2 consecutive transmembrane segments (helical) span residues 264 to 284 and 293 to 313; these read LGVNVGSLMVPVFVVLLGVVW and FFTAPATVSLVGVTVFFSFLV.

The protein resides in the membrane. This is Transmembrane and ubiquitin-like domain-containing protein 2 (Tmub2) from Rattus norvegicus (Rat).